The sequence spans 529 residues: Glucocorticoid modulatory element-binding protein 2 (529 aa).

The region spanning 80–162 is the SAND domain; the sequence is EEGENLEAEI…RKIMDSGELD (83 aa). Cys109 is a Zn(2+) binding site. Lys135, Lys139, Lys142, and Arg153 together coordinate DNA. Lys154 is covalently cross-linked (Glycyl lysine isopeptide (Lys-Gly) (interchain with G-Cter in SUMO1); alternate). Lys154 is covalently cross-linked (Glycyl lysine isopeptide (Lys-Gly) (interchain with G-Cter in SUMO2); alternate). Residues His166, Cys170, and Cys174 each contribute to the Zn(2+) site. A coiled-coil region spans residues 244 to 347; the sequence is LLDEVIQEFQ…HLSNVLMTLT (104 aa). Ser372 carries the phosphoserine modification.

In terms of assembly, homodimer, and heterodimer of GMEB1 and GMEB2. Interacts with the glucocorticoid receptor (NR3C1). May interact with CREB-binding protein (CBP).

It localises to the nucleus. The protein resides in the cytoplasm. Its function is as follows. Trans-acting factor that binds to glucocorticoid modulatory elements (GME) present in the TAT (tyrosine aminotransferase) promoter and increases sensitivity to low concentrations of glucocorticoids. Also binds to the transferrin receptor promoter. The sequence is that of Glucocorticoid modulatory element-binding protein 2 (Gmeb2) from Rattus norvegicus (Rat).